Reading from the N-terminus, the 209-residue chain is Large ribosomal subunit protein uL3 (209 aa).

The segment covering 112 to 122 (GTTRGHGTQGN) has biased composition (polar residues). Positions 112–146 (GTTRGHGTQGNIKRWGQSRGPETHGSRYHRIPGSM) are disordered.

Belongs to the universal ribosomal protein uL3 family. Part of the 50S ribosomal subunit. Forms a cluster with proteins L14 and L19.

In terms of biological role, one of the primary rRNA binding proteins, it binds directly near the 3'-end of the 23S rRNA, where it nucleates assembly of the 50S subunit. In Lactobacillus johnsonii (strain CNCM I-12250 / La1 / NCC 533), this protein is Large ribosomal subunit protein uL3.